The primary structure comprises 270 residues: MSASPSIRPTAGIAPPLLDLRIARKLYGDRTILSDIALQVARGEIVCVVGPSGCGKSTLLRIVAGLDPDFRGSVTLDGSALAGPSARVGVIFQEPRLLPWLSIADNVGFASGARGGRDPSVERLLDEVGLAGVARQLPATLSGGMAQRAAIARGLFGEPDLLLLDEPFSAVDAITRMRLQTLLLDVVHRHRMAAIVVTHDLDEALYLGDRVLMLAPNPGRVDDEIQVDVARPRDRRDPSLAAQRARLIDAFQRFHDRAAGDPAGIPITSA.

Residues 17–241 form the ABC transporter domain; it reads LLDLRIARKL…PRDRRDPSLA (225 aa). 50-57 lines the ATP pocket; sequence GPSGCGKS.

It belongs to the ABC transporter superfamily. Aliphatic sulfonates importer (TC 3.A.1.17.2) family. As to quaternary structure, the complex is composed of two ATP-binding proteins (SsuB), two transmembrane proteins (SsuC) and a solute-binding protein (SsuA).

The protein resides in the cell inner membrane. The enzyme catalyses ATP + H2O + aliphatic sulfonate-[sulfonate-binding protein]Side 1 = ADP + phosphate + aliphatic sulfonateSide 2 + [sulfonate-binding protein]Side 1.. Its function is as follows. Part of the ABC transporter complex SsuABC involved in aliphatic sulfonates import. Responsible for energy coupling to the transport system. This chain is Aliphatic sulfonates import ATP-binding protein SsuB 2, found in Burkholderia cenocepacia (strain HI2424).